The primary structure comprises 799 residues: Serine/threonine-protein kinase AfsK (799 aa).

One can recognise a Protein kinase domain in the interval 16–271 (FEVLGRLGAG…QAQLAPHLFG (256 aa)). Residues 22–30 (LGAGGMGLV) and K44 contribute to the ATP site. Position 71 is a phosphoserine; by autocatalysis (S71). D138 functions as the Proton acceptor in the catalytic mechanism. Phosphothreonine; by autocatalysis is present on T168. Disordered stretches follow at residues 295–343 (RRNG…PAPP) and 393–426 (LAASWSRPRPGVNGADPAVPAPAPAPPEASPAGW). 2 stretches are compositionally biased toward pro residues: residues 325 to 343 (HAPPLPPPPAHDPVVPAPP) and 411 to 421 (VPAPAPAPPEA).

Belongs to the protein kinase superfamily. Ser/Thr protein kinase family. Interacts (via the N-terminal kinase domain) with KbpA; the interaction prevents autophosphorylation of AfsK. Post-translationally, autophosphorylated mainly on threonine residues. Some phosphorylation on serine residues. Autophosphorylation on Thr-168 is the major site enhancing kinase activity towards AfsR, and is regulated though interaction with KbpA.

It carries out the reaction L-seryl-[protein] + ATP = O-phospho-L-seryl-[protein] + ADP + H(+). The catalysed reaction is L-threonyl-[protein] + ATP = O-phospho-L-threonyl-[protein] + ADP + H(+). Its function is as follows. Involved in the regulation of secondary metabolism by phosphorylating, on both Ser and Thr, the AfsR global regulatory protein involved in the control of secondary metabolism. The polypeptide is Serine/threonine-protein kinase AfsK (afsK) (Streptomyces coelicolor (strain ATCC BAA-471 / A3(2) / M145)).